The chain runs to 287 residues: MLLKGTPVAERVLEKIKQEISHSSTPPGLAVVLIGNDPASEVYVGMKVKKATDLGMVSKAHRLPSDATLTDILKLIERLNNDPTIHGILVQIPLPKHLDSHAIIQAISPEKDVDGLHPVNMGKLLLGQLGGFAPCTPAGIIELLHYYEIPLLGRHVAVVGRSNIVGKPLAAMLMQKHPSTNATVTLLHSQSQNLKEILKTADIIIAAVGVPLFIKESMVSSHAVIIDVGTSRVATNNAKGYILVGDVDFNNVVTKCKAISPVPGGVGPMTVAMLMKNTWESYQKFSS.

NADP(+) is bound by residues 160 to 162, Ser-189, and Thr-230; that span reads GRS.

Belongs to the tetrahydrofolate dehydrogenase/cyclohydrolase family. As to quaternary structure, homodimer.

The catalysed reaction is (6R)-5,10-methylene-5,6,7,8-tetrahydrofolate + NADP(+) = (6R)-5,10-methenyltetrahydrofolate + NADPH. It catalyses the reaction (6R)-5,10-methenyltetrahydrofolate + H2O = (6R)-10-formyltetrahydrofolate + H(+). The protein operates within one-carbon metabolism; tetrahydrofolate interconversion. Its function is as follows. Catalyzes the oxidation of 5,10-methylenetetrahydrofolate to 5,10-methenyltetrahydrofolate and then the hydrolysis of 5,10-methenyltetrahydrofolate to 10-formyltetrahydrofolate. The protein is Bifunctional protein FolD of Chlamydia abortus (strain DSM 27085 / S26/3) (Chlamydophila abortus).